We begin with the raw amino-acid sequence, 183 residues long: uncharacterized protein (183 aa).

This is an uncharacterized protein from Acanthamoeba polyphaga mimivirus (APMV).